The sequence spans 228 residues: 5'-methylthioadenosine/S-adenosylhomocysteine nucleosidase (228 aa).

Glutamate 11 serves as the catalytic Proton acceptor. Residues glycine 77, isoleucine 151, and 172–173 (ME) contribute to the substrate site. Catalysis depends on aspartate 196, which acts as the Proton donor.

It belongs to the PNP/UDP phosphorylase family. MtnN subfamily.

It carries out the reaction S-adenosyl-L-homocysteine + H2O = S-(5-deoxy-D-ribos-5-yl)-L-homocysteine + adenine. It catalyses the reaction S-methyl-5'-thioadenosine + H2O = 5-(methylsulfanyl)-D-ribose + adenine. The catalysed reaction is 5'-deoxyadenosine + H2O = 5-deoxy-D-ribose + adenine. It functions in the pathway amino-acid biosynthesis; L-methionine biosynthesis via salvage pathway; S-methyl-5-thio-alpha-D-ribose 1-phosphate from S-methyl-5'-thioadenosine (hydrolase route): step 1/2. In terms of biological role, catalyzes the irreversible cleavage of the glycosidic bond in both 5'-methylthioadenosine (MTA) and S-adenosylhomocysteine (SAH/AdoHcy) to adenine and the corresponding thioribose, 5'-methylthioribose and S-ribosylhomocysteine, respectively. Also cleaves 5'-deoxyadenosine, a toxic by-product of radical S-adenosylmethionine (SAM) enzymes, into 5-deoxyribose and adenine. In Staphylococcus epidermidis (strain ATCC 12228 / FDA PCI 1200), this protein is 5'-methylthioadenosine/S-adenosylhomocysteine nucleosidase.